Here is a 218-residue protein sequence, read N- to C-terminus: Large ribosomal subunit protein uL3 (218 aa).

Belongs to the universal ribosomal protein uL3 family. As to quaternary structure, part of the 50S ribosomal subunit. Forms a cluster with proteins L14 and L19.

One of the primary rRNA binding proteins, it binds directly near the 3'-end of the 23S rRNA, where it nucleates assembly of the 50S subunit. This Corynebacterium efficiens (strain DSM 44549 / YS-314 / AJ 12310 / JCM 11189 / NBRC 100395) protein is Large ribosomal subunit protein uL3.